The sequence spans 151 residues: Large ribosomal subunit protein uL15 (151 aa).

The tract at residues 1-51 (MKSLRLEDAVPQSGSRHRKLRVGRGHSAGQGKTSGRGMRGQKCRSGGGVRP) is disordered. A compositionally biased stretch (basic residues) spans 15–24 (SRHRKLRVGR). Over residues 26 to 38 (HSAGQGKTSGRGM) the composition is skewed to gly residues.

The protein belongs to the universal ribosomal protein uL15 family. Part of the 50S ribosomal subunit.

Its function is as follows. Binds to the 23S rRNA. In Gloeobacter violaceus (strain ATCC 29082 / PCC 7421), this protein is Large ribosomal subunit protein uL15.